Here is a 217-residue protein sequence, read N- to C-terminus: Oxygen regulatory protein NreC (217 aa).

Positions 2–119 (KIVIADDHAV…QLISAVRTVY (118 aa)) constitute a Response regulatory domain. The residue at position 53 (Asp53) is a 4-aspartylphosphate. One can recognise an HTH luxR-type domain in the interval 148–213 (TNDPFRILSK…ELVEYALKKK (66 aa)). The H-T-H motif DNA-binding region spans 172–191 (NKEIAEKLFVSVKTVEAHKT).

In terms of processing, phosphorylated by NreB.

It is found in the cytoplasm. Functionally, member of the two-component regulatory system NreB/NreC involved in the control of dissimilatory nitrate/nitrite reduction in response to oxygen. Phosphorylated NreC binds to a GC-rich palindromic sequence at the promoters of the nitrate (narGHJI) and nitrite (nir) reductase operons, as well as the putative nitrate transporter gene narT, and activates their expression. The polypeptide is Oxygen regulatory protein NreC (nreC) (Staphylococcus carnosus (strain TM300)).